The primary structure comprises 435 residues: UDP-N-acetylmuramate--L-alanine ligase (435 aa).

Residue glycine 108–threonine 114 participates in ATP binding.

This sequence belongs to the MurCDEF family.

The protein localises to the cytoplasm. The enzyme catalyses UDP-N-acetyl-alpha-D-muramate + L-alanine + ATP = UDP-N-acetyl-alpha-D-muramoyl-L-alanine + ADP + phosphate + H(+). The protein operates within cell wall biogenesis; peptidoglycan biosynthesis. Its function is as follows. Cell wall formation. This Campylobacter curvus (strain 525.92) protein is UDP-N-acetylmuramate--L-alanine ligase.